Here is a 166-residue protein sequence, read N- to C-terminus: Large ribosomal subunit protein uL10 (166 aa).

Belongs to the universal ribosomal protein uL10 family. Part of the ribosomal stalk of the 50S ribosomal subunit. The N-terminus interacts with L11 and the large rRNA to form the base of the stalk. The C-terminus forms an elongated spine to which L12 dimers bind in a sequential fashion forming a multimeric L10(L12)X complex.

Functionally, forms part of the ribosomal stalk, playing a central role in the interaction of the ribosome with GTP-bound translation factors. This Staphylococcus epidermidis (strain ATCC 35984 / DSM 28319 / BCRC 17069 / CCUG 31568 / BM 3577 / RP62A) protein is Large ribosomal subunit protein uL10.